Here is a 271-residue protein sequence, read N- to C-terminus: Phosphate import ATP-binding protein PstB (271 aa).

One can recognise an ABC transporter domain in the interval 25 to 266 (VDVRQLSLWY…PKHPYTEAYI (242 aa)). Residue 57-64 (GPSGCGKS) coordinates ATP.

Belongs to the ABC transporter superfamily. Phosphate importer (TC 3.A.1.7) family. The complex is composed of two ATP-binding proteins (PstB), two transmembrane proteins (PstC and PstA) and a solute-binding protein (PstS).

It is found in the cell inner membrane. The catalysed reaction is phosphate(out) + ATP + H2O = ADP + 2 phosphate(in) + H(+). In terms of biological role, part of the ABC transporter complex PstSACB involved in phosphate import. Responsible for energy coupling to the transport system. The sequence is that of Phosphate import ATP-binding protein PstB from Thermus thermophilus (strain ATCC BAA-163 / DSM 7039 / HB27).